Reading from the N-terminus, the 351-residue chain is Homeobox protein rough sheath 1 (351 aa).

Disordered stretches follow at residues 1–23 (MDQS…NSKA), 57–82 (AAAP…GAEM), and 187–229 (GGGS…PRAE). Residues 57-68 (AAAPSSSQQHQQ) are compositionally biased toward low complexity. Residues 214-229 (PNGRENDPPEIDPRAE) are compositionally biased toward basic and acidic residues. Residues 232–252 (ELKYQLLKKYSGYLSSLRQEF) form the ELK domain. A DNA-binding region (homeobox; TALE-type) is located at residues 253 to 316 (SKKKKKGKLP…NQRKRHWKPS (64 aa)).

It belongs to the TALE/KNOX homeobox family.

The protein localises to the nucleus. Functionally, plays a possible role in patterning the placement of lateral organs along the axis of the shoot. Mutations in RS1 alters cell fate and causes unregulated cell division and expansion in the leaf. Probably binds to the DNA sequence 5'-TGAC-3'. The polypeptide is Homeobox protein rough sheath 1 (RS1) (Zea mays (Maize)).